The following is a 112-amino-acid chain: Pediocin PA-1 immunity protein (112 aa).

Its function is as follows. Imparts immunity to pediocin PA-1/ACH to naturally sensitive host strains. The protein is Pediocin PA-1 immunity protein (pedB) of Pediococcus acidilactici.